We begin with the raw amino-acid sequence, 203 residues long: Dual-action ribosomal maturation protein DarP (203 aa).

Disordered stretches follow at residues 1–31 (MPPM…SKSQ) and 182–203 (GGAS…DDEA). Residues 186–203 (DSDDEAADDAGDDHDDEA) show a composition bias toward acidic residues.

It belongs to the DarP family.

The protein localises to the cytoplasm. In terms of biological role, member of a network of 50S ribosomal subunit biogenesis factors which assembles along the 30S-50S interface, preventing incorrect 23S rRNA structures from forming. Promotes peptidyl transferase center (PTC) maturation. This chain is Dual-action ribosomal maturation protein DarP, found in Burkholderia cenocepacia (strain HI2424).